The primary structure comprises 106 residues: Large ribosomal subunit protein bL21 (106 aa).

It belongs to the bacterial ribosomal protein bL21 family. In terms of assembly, part of the 50S ribosomal subunit. Contacts protein L20.

This protein binds to 23S rRNA in the presence of protein L20. The polypeptide is Large ribosomal subunit protein bL21 (Thermosipho africanus (strain TCF52B)).